The following is a 273-amino-acid chain: WIMGHMVNAIAQIDEFVNLGANSIETDVSFDKNANPEYTYHGIPCDCGRTCTKWEYFNTFLGGLRKATTPGDSKYHEKLVLVVFDLKTGSLYDNQAYDAGTKLAKSLLQNYWNKGNNGGRAYIVLSIPNLDHYKLITGFKETLTKEEHPELMDKVGYDFSGNDDIGDVAKAYKKAGVTGHVWQSDGITNCLLRGLDRVRKAVANRDSSNGYINKVYYWTVDKRASTRDALDAGVDGIMTNYPDVIADVLSESAYTAKFRIATYDDNPWEMFKN.

Residue histidine 5 is part of the active site. Mg(2+)-binding residues include glutamate 25 and aspartate 27. Histidine 41 (nucleophile) is an active-site residue. Intrachain disulfides connect cysteine 45–cysteine 51 and cysteine 47–cysteine 190. Residue aspartate 85 coordinates Mg(2+).

It belongs to the arthropod phospholipase D family. Class II subfamily. The cofactor is Mg(2+). Expressed by the venom gland.

Its subcellular location is the secreted. The enzyme catalyses an N-(acyl)-sphingosylphosphocholine = an N-(acyl)-sphingosyl-1,3-cyclic phosphate + choline. The catalysed reaction is an N-(acyl)-sphingosylphosphoethanolamine = an N-(acyl)-sphingosyl-1,3-cyclic phosphate + ethanolamine. It carries out the reaction a 1-acyl-sn-glycero-3-phosphocholine = a 1-acyl-sn-glycero-2,3-cyclic phosphate + choline. It catalyses the reaction a 1-acyl-sn-glycero-3-phosphoethanolamine = a 1-acyl-sn-glycero-2,3-cyclic phosphate + ethanolamine. In terms of biological role, dermonecrotic toxins cleave the phosphodiester linkage between the phosphate and headgroup of certain phospholipids (sphingolipid and lysolipid substrates), forming an alcohol (often choline) and a cyclic phosphate. This toxin acts on sphingomyelin (SM). It may also act on ceramide phosphoethanolamine (CPE), lysophosphatidylcholine (LPC) and lysophosphatidylethanolamine (LPE), but not on lysophosphatidylserine (LPS), and lysophosphatidylglycerol (LPG). It acts by transphosphatidylation, releasing exclusively cyclic phosphate products as second products. Induces dermonecrosis, hemolysis, increased vascular permeability, edema, inflammatory response, and platelet aggregation. This Loxosceles sabina (Tucson recluse spider) protein is Dermonecrotic toxin LsaSicTox-alphaIB1aiii.